The sequence spans 135 residues: Large ribosomal subunit protein eL27y (135 aa).

The protein belongs to the eukaryotic ribosomal protein eL27 family.

In Arabidopsis thaliana (Mouse-ear cress), this protein is Large ribosomal subunit protein eL27y (RPL27B).